Reading from the N-terminus, the 120-residue chain is Small ribosomal subunit protein eS17 (120 aa).

This sequence belongs to the eukaryotic ribosomal protein eS17 family. Component of the small ribosomal subunit.

The protein localises to the cytoplasm. The polypeptide is Small ribosomal subunit protein eS17 (RPS17) (Encephalitozoon cuniculi (strain GB-M1) (Microsporidian parasite)).